Reading from the N-terminus, the 295-residue chain is 3-methyl-2-oxobutanoate hydroxymethyltransferase (295 aa).

Mg(2+) contacts are provided by D53 and D92. Residues 53–54 (DS), D92, and K122 contribute to the 3-methyl-2-oxobutanoate site. Residue E124 participates in Mg(2+) binding. The active-site Proton acceptor is E191.

Belongs to the PanB family. In terms of assembly, homodecamer; pentamer of dimers. The cofactor is Mg(2+).

The protein resides in the cytoplasm. The enzyme catalyses 3-methyl-2-oxobutanoate + (6R)-5,10-methylene-5,6,7,8-tetrahydrofolate + H2O = 2-dehydropantoate + (6S)-5,6,7,8-tetrahydrofolate. It participates in cofactor biosynthesis; (R)-pantothenate biosynthesis; (R)-pantoate from 3-methyl-2-oxobutanoate: step 1/2. In terms of biological role, catalyzes the reversible reaction in which hydroxymethyl group from 5,10-methylenetetrahydrofolate is transferred onto alpha-ketoisovalerate to form ketopantoate. This chain is 3-methyl-2-oxobutanoate hydroxymethyltransferase, found in Koribacter versatilis (strain Ellin345).